A 456-amino-acid chain; its full sequence is MKKLTCFKAYDIRGKLGEELNEDIAWRIGRAYGEFLKPKTIVLGGDVRLTSETLKLALAKGLQDAGVDVLDIGMSGTEEIYFATFHLGVDGGIEVTASHNPMDYNGMKLVREGARPISGDTGLRDVQRLAEANDFPPVDETKRGRYQQINLRDAYVDHLFGYINVKNLTPLKLVINSGNGAAGPVVDAIEARFKALGAPVELIKVHNTPDGNFPNGIPNPLLPECRDDTRNAVIKHGADMGIAFDGDFDRCFLFDEKGQFIEGYYIVGLLAEAFLEKNPGAKIIHDPRLSWNTVDVVTAAGGTPVMSKTGHAFIKERMRKEDAIYGGEMSAHHYFRDFAYCDSGMIPWLLVAELVCLKDKTLGELVRDRMAAFPASGEINSKLAQPVEAINRVEQHFSREALAVDRTDGISMTFADWRFNLRTSNTEPVVRLNVESRGDVPLMEARTRTLLTLLNE.

The active-site Phosphoserine intermediate is the S98. Mg(2+)-binding residues include S98, D245, D247, and D249.

The protein belongs to the phosphohexose mutase family. Requires Mg(2+) as cofactor.

The enzyme catalyses alpha-D-mannose 1-phosphate = D-mannose 6-phosphate. It participates in nucleotide-sugar biosynthesis; GDP-alpha-D-mannose biosynthesis; alpha-D-mannose 1-phosphate from D-fructose 6-phosphate: step 2/2. Functionally, involved in the biosynthesis of the capsular polysaccharide colanic acid. This chain is Phosphomannomutase (manB), found in Escherichia coli (strain K12).